Reading from the N-terminus, the 139-residue chain is Peptide methionine sulfoxide reductase B5 (139 aa).

Ala-2 carries the N-acetylalanine modification. Positions 12 to 133 (EEEWRAVLSP…NSVSISFNPA (122 aa)) constitute a MsrB domain. 4 residues coordinate Zn(2+): Cys-51, Cys-54, Cys-97, and Cys-100. A disulfide bridge connects residues Cys-69 and Cys-122. Cys-122 serves as the catalytic Nucleophile.

This sequence belongs to the MsrB Met sulfoxide reductase family. The cofactor is Zn(2+).

Its subcellular location is the cytoplasm. It localises to the cytosol. The enzyme catalyses L-methionyl-[protein] + [thioredoxin]-disulfide + H2O = L-methionyl-(R)-S-oxide-[protein] + [thioredoxin]-dithiol. Functionally, catalyzes the reduction of methionine sulfoxide (MetSO) to methionine in proteins. Plays a protective role against oxidative stress by restoring activity to proteins that have been inactivated by methionine oxidation. MSRB family specifically reduces the MetSO R-enantiomer. This is Peptide methionine sulfoxide reductase B5 (MSRB5) from Arabidopsis thaliana (Mouse-ear cress).